A 189-amino-acid chain; its full sequence is Isopentenyl-diphosphate Delta-isomerase (189 aa).

Mn(2+) is bound by residues His27 and His34. The 140-residue stretch at 32–171 (PLHFAFSTYI…PFVFSPWLVD (140 aa)) folds into the Nudix hydrolase domain. Cys69 is an active-site residue. Cys69 contacts Mg(2+). His71 serves as a coordination point for Mn(2+). Glu89 lines the Mg(2+) pocket. Glu119 and Glu121 together coordinate Mn(2+). Residue Glu121 is part of the active site.

The protein belongs to the IPP isomerase type 1 family. It depends on Mg(2+) as a cofactor. Requires Mn(2+) as cofactor.

It is found in the cytoplasm. It catalyses the reaction isopentenyl diphosphate = dimethylallyl diphosphate. Its pathway is isoprenoid biosynthesis; dimethylallyl diphosphate biosynthesis; dimethylallyl diphosphate from isopentenyl diphosphate: step 1/1. Its function is as follows. Catalyzes the 1,3-allylic rearrangement of the homoallylic substrate isopentenyl (IPP) to its highly electrophilic allylic isomer, dimethylallyl diphosphate (DMAPP). The protein is Isopentenyl-diphosphate Delta-isomerase of Corynebacterium glutamicum (strain ATCC 13032 / DSM 20300 / JCM 1318 / BCRC 11384 / CCUG 27702 / LMG 3730 / NBRC 12168 / NCIMB 10025 / NRRL B-2784 / 534).